We begin with the raw amino-acid sequence, 336 residues long: DNA-directed RNA polymerase subunit alpha (336 aa).

The alpha N-terminal domain (alpha-NTD) stretch occupies residues 1-226 (MLIAQRPTLS…ELFGLARELN (226 aa)). Positions 241-336 (AALAADMALP…DDAAFSDDEL (96 aa)) are alpha C-terminal domain (alpha-CTD).

It belongs to the RNA polymerase alpha chain family. Homodimer. The RNAP catalytic core consists of 2 alpha, 1 beta, 1 beta' and 1 omega subunit. When a sigma factor is associated with the core the holoenzyme is formed, which can initiate transcription.

The catalysed reaction is RNA(n) + a ribonucleoside 5'-triphosphate = RNA(n+1) + diphosphate. In terms of biological role, DNA-dependent RNA polymerase catalyzes the transcription of DNA into RNA using the four ribonucleoside triphosphates as substrates. The sequence is that of DNA-directed RNA polymerase subunit alpha from Arthrobacter sp. (strain FB24).